The primary structure comprises 246 residues: MHRPPLPLVLLLLCCRAQAGEIIGGTESKPHSRPYMAYLEIVTSQEKQVACGGFLIRRDFVLTAAHCAGRSVTVTLGAHNIQKKEDTWQRLEVIKQFPYPKYEPVGVHDIMLLKLKEKANLTLAVGTLPLPPHVTFIRPGRMCQVAGWGRTGVKEPASSTLQEVKLRLMEPRACRHFRAFDHNLQLCVGNPQSTKSAFKGDSGGPLLCAGVAQGIVSYGLSSAKPPAVFTRISPYRPWIDEVLKEN.

An N-terminal signal peptide occupies residues 1-19 (MHRPPLPLVLLLLCCRAQA). The propeptide at 20 to 21 (GE) is activation peptide. The region spanning 22 to 244 (IIGGTESKPH…YRPWIDEVLK (223 aa)) is the Peptidase S1 domain. A disulfide bond links cysteine 51 and cysteine 67. Residues histidine 66 and aspartate 109 each act as charge relay system in the active site. N-linked (GlcNAc...) asparagine glycosylation is present at asparagine 120. Cystine bridges form between cysteine 143–cysteine 208 and cysteine 174–cysteine 187. Serine 202 acts as the Charge relay system in catalysis.

This sequence belongs to the peptidase S1 family. Granzyme subfamily.

The protein localises to the secreted. It is found in the cytoplasmic granule. Its function is as follows. Putative mast cell chymase. This Ovis aries (Sheep) protein is Mast cell protease 2.